The chain runs to 579 residues: Zinc finger protein 382 (579 aa).

The segment covering 1–12 has biased composition (basic residues); that stretch reads MGRPGRKPRGRA. The interval 1 to 37 is disordered; sequence MGRPGRKPRGRARPGLFPFPKEELRQGGSSPANLNAM. A mediates interaction with TRIM28 region spans residues 12 to 135; it reads ARPGLFPFPK…DKPPKSIVII (124 aa). Residues 27–36 show a composition bias toward polar residues; the sequence is GGSSPANLNA. Represses transcription stretches follow at residues 40–81 and 105–240; these read GPVS…FISV and IFPS…PEQR. The KRAB domain maps to 42 to 113; that stretch reads VSFKDVTVDF…RIFPSQSYLE (72 aa). The C2H2-type 1; degenerate zinc-finger motif lies at 241–263; it reads FEYNKCDSSFLMTGVEFPHGRAH. C2H2-type zinc fingers lie at residues 325-347, 353-375, 381-403, 409-431, 437-459, 465-487, 493-515, 521-543, and 549-571; these read FQCPYCGNSFRRKSYLIEHERIH, YICCQCGRAFRQKTALTLHEKTH, YLCVDCGKSFRQKATLTRHHKAH, YECTQCGSAFGKKSYLIDHQRTH, YQCTECGKAFIQKTTLTVHQRTH, YICSECGKSFCQKTTLTLHQRIH, YICSDCGKSFRQKAILTVHYRIH, NGCPQCGKAFSRKSNLIRHQKIH, and YECQECGKFFSCKSNLITHQKTH. The required for transcriptional repression activity; probably mediates sequence-specific DNA-binding stretch occupies residues 325-579; it reads FQCPYCGNSF…THKTETMRFQ (255 aa).

The protein belongs to the krueppel C2H2-type zinc-finger protein family. In terms of assembly, interacts with TRIM28; enhances the transcriptional repressor activity.

It localises to the nucleus. Functions as a sequence-specific transcriptional repressor. This Mus musculus (Mouse) protein is Zinc finger protein 382 (Znf382).